The chain runs to 86 residues: BolA-like protein 2 (86 aa).

M1 carries the N-acetylmethionine modification.

Belongs to the BolA/IbaG family. As to quaternary structure, interacts with GLRX3; forms a heterotrimeric complex composed by two BOLA2 molecules and one GLRX3 molecule; linked by [2Fe-2S] clusters.

The protein resides in the cytoplasm. The protein localises to the nucleus. In terms of biological role, acts as a cytosolic iron-sulfur (Fe-S) cluster assembly factor that facilitates [2Fe-2S] cluster insertion into a subset of cytosolic proteins. Acts together with the monothiol glutaredoxin GLRX3. The chain is BolA-like protein 2 (BOLA2) from Homo sapiens (Human).